Reading from the N-terminus, the 283-residue chain is Bifunctional protein FolD (283 aa).

Residues 164–166, serine 189, and isoleucine 230 each bind NADP(+); that span reads GRS.

It belongs to the tetrahydrofolate dehydrogenase/cyclohydrolase family. In terms of assembly, homodimer.

It catalyses the reaction (6R)-5,10-methylene-5,6,7,8-tetrahydrofolate + NADP(+) = (6R)-5,10-methenyltetrahydrofolate + NADPH. The catalysed reaction is (6R)-5,10-methenyltetrahydrofolate + H2O = (6R)-10-formyltetrahydrofolate + H(+). It functions in the pathway one-carbon metabolism; tetrahydrofolate interconversion. Catalyzes the oxidation of 5,10-methylenetetrahydrofolate to 5,10-methenyltetrahydrofolate and then the hydrolysis of 5,10-methenyltetrahydrofolate to 10-formyltetrahydrofolate. The chain is Bifunctional protein FolD from Pelobacter propionicus (strain DSM 2379 / NBRC 103807 / OttBd1).